Reading from the N-terminus, the 216-residue chain is Nucleoside triphosphate pyrophosphatase (216 aa).

Aspartate 86 functions as the Proton acceptor in the catalytic mechanism.

The protein belongs to the Maf family. A divalent metal cation is required as a cofactor.

The protein localises to the cytoplasm. The enzyme catalyses a ribonucleoside 5'-triphosphate + H2O = a ribonucleoside 5'-phosphate + diphosphate + H(+). The catalysed reaction is a 2'-deoxyribonucleoside 5'-triphosphate + H2O = a 2'-deoxyribonucleoside 5'-phosphate + diphosphate + H(+). Its function is as follows. Nucleoside triphosphate pyrophosphatase. May have a dual role in cell division arrest and in preventing the incorporation of modified nucleotides into cellular nucleic acids. The polypeptide is Nucleoside triphosphate pyrophosphatase (Dictyostelium discoideum (Social amoeba)).